Reading from the N-terminus, the 1062-residue chain is SLIT-ROBO Rho GTPase-activating protein 1 (1062 aa).

The region spanning 19–314 is the F-BAR domain; sequence SQVKEIRAQL…AVDNLEPRSD (296 aa). The stretch at 352–382 forms a coiled coil; the sequence is QAELMLRNQQLQSRLATLKIESEEVKKTTEA. Serine 416 carries the post-translational modification Phosphoserine. Residues 481-671 form the Rho-GAP domain; it reads GRRNSHARHQ…TIIIHHETIF (191 aa). Positions 720 to 779 constitute an SH3 domain; that stretch reads CEPIEAIAKFDYVGRSARELSFKKGASLLLYHRASEDWWEGRHNGIDGLVPHQYIVVQDM. Residues 785 to 799 show a composition bias toward polar residues; the sequence is DTLSQKADSEASSGP. The segment at 785–931 is disordered; the sequence is DTLSQKADSE…TGFNDHKPLD (147 aa). Phosphoserine is present on residues serine 812 and serine 894. Residues 899–908 are compositionally biased toward basic and acidic residues; sequence SRHDSLKKID. Position 909 is a phosphoserine (serine 909). The span at 914–923 shows a compositional bias: polar residues; the sequence is RSTSSGQYTG. Positions 933–960 form a coiled coil; the sequence is ETIAQDIEETMNTALNELRELERQSTVK. Residues 974–988 show a composition bias toward polar residues; that stretch reads KNSPTPATSTESLSP. Disordered stretches follow at residues 974 to 1013 and 1028 to 1062; these read KNSP…ETMS and KPPA…SCTM. Serine 976 carries the post-translational modification Phosphoserine. Threonine 978 bears the Phosphothreonine mark. The span at 1004–1013 shows a compositional bias: low complexity; that stretch reads STSSSSETMS. Position 1009 is a phosphoserine (serine 1009). Over residues 1053 to 1062 the composition is skewed to polar residues; sequence QGPTDKSCTM.

Homodimer. Forms a heterooligomer with SRGAP2 and SRGAP3 through its F-BAR domain. Interacts with CDC42 and RHOA. Interacts with FASLG. Interacts (via SH3 domain) with ROBO1.

In terms of biological role, GTPase-activating protein for RhoA and Cdc42 small GTPases. Together with CDC42 seems to be involved in the pathway mediating the repulsive signaling of Robo and Slit proteins in neuronal migration. SLIT2, probably through interaction with ROBO1, increases the interaction of SRGAP1 with ROBO1 and inactivates CDC42. The sequence is that of SLIT-ROBO Rho GTPase-activating protein 1 (Srgap1) from Mus musculus (Mouse).